The chain runs to 674 residues: F420-dependent formate dehydrogenase 1 subunit alpha (674 aa).

Positions 3-59 (LDFIHTICPYCGTGCGVDLVVKDGTLVGTNPFKRHPVNEGKTCIKGSYCHEFVHRDD) constitute a 4Fe-4S Mo/W bis-MGD-type domain. [4Fe-4S] cluster-binding residues include Cys-10, Cys-13, Cys-17, and Cys-45. Sec-132 is a non-standard amino acid (selenocysteine).

The protein belongs to the prokaryotic molybdopterin-containing oxidoreductase family. Dimer of an alpha (FdhA1) and a beta (FdhB1) subunit. Requires [4Fe-4S] cluster as cofactor. The cofactor is Mo-bis(molybdopterin guanine dinucleotide). Zn(2+) serves as cofactor.

The catalysed reaction is oxidized coenzyme F420-(gamma-L-Glu)(n) + formate + 2 H(+) = reduced coenzyme F420-(gamma-L-Glu)(n) + CO2. In terms of biological role, catalyzes the oxidation of formate to carbon dioxide, with coenzyme F420 as the electron acceptor. In vitro can also use methyl viologen as electron acceptor. The sequence is that of F420-dependent formate dehydrogenase 1 subunit alpha from Methanococcus maripaludis (strain DSM 14266 / JCM 13030 / NBRC 101832 / S2 / LL).